The chain runs to 204 residues: Urease accessory protein UreG (204 aa).

Gly12 to Thr19 contributes to the GTP binding site.

It belongs to the SIMIBI class G3E GTPase family. UreG subfamily. As to quaternary structure, homodimer. UreD, UreF and UreG form a complex that acts as a GTP-hydrolysis-dependent molecular chaperone, activating the urease apoprotein by helping to assemble the nickel containing metallocenter of UreC. The UreE protein probably delivers the nickel.

The protein localises to the cytoplasm. In terms of biological role, facilitates the functional incorporation of the urease nickel metallocenter. This process requires GTP hydrolysis, probably effectuated by UreG. The sequence is that of Urease accessory protein UreG from Pseudomonas aeruginosa (strain LESB58).